Reading from the N-terminus, the 452-residue chain is Isocitrate dehydrogenase [NADP], mitochondrial (452 aa).

Residues 1 to 39 (MAGYLRVVRSLCRASGSRPAWAPAALTAPTSQEQPRRHY) constitute a mitochondrion transit peptide. Residues Lys-45, Lys-48, Lys-67, and Lys-69 each carry the N6-acetyllysine modification. N6-acetyllysine; alternate occurs at positions 80 and 106. N6-succinyllysine; alternate occurs at positions 80 and 106. NADP(+) is bound by residues 115–117 (TIT) and Arg-122. Thr-117 is a binding site for D-threo-isocitrate. D-threo-isocitrate-binding positions include 134-140 (SPNGTIR) and Arg-149. Position 155 is an N6-acetyllysine (Lys-155). An N6-acetyllysine; alternate modification is found at Lys-166. Position 166 is an N6-succinyllysine; alternate (Lys-166). Position 172 (Arg-172) interacts with D-threo-isocitrate. An N6-acetyllysine; alternate mark is found at Lys-180 and Lys-193. An N6-succinyllysine; alternate mark is found at Lys-180 and Lys-193. Position 199 is an N6-acetyllysine (Lys-199). Residue Lys-256 is modified to N6-acetyllysine; alternate. Lys-256 is modified (N6-succinyllysine; alternate). N6-acetyllysine occurs at positions 263, 272, 275, and 280. Lys-282 carries the N6-acetyllysine; alternate modification. Lys-282 carries the post-translational modification N6-succinyllysine; alternate. Residue Asp-291 coordinates Mn(2+). NADP(+) is bound at residue Lys-299. Asp-314 lines the Mn(2+) pocket. NADP(+) contacts are provided by residues 349–354 (GTVTRH) and Asn-367. Lys-384 is modified (N6-acetyllysine; alternate). N6-succinyllysine; alternate is present on Lys-384. An N6-acetyllysine mark is found at Lys-400, Lys-413, and Lys-442.

The protein belongs to the isocitrate and isopropylmalate dehydrogenases family. Homodimer. It depends on Mg(2+) as a cofactor. Mn(2+) is required as a cofactor. Post-translationally, acetylation at Lys-413 dramatically reduces catalytic activity. Deacetylated by SIRT3.

The protein localises to the mitochondrion. It catalyses the reaction D-threo-isocitrate + NADP(+) = 2-oxoglutarate + CO2 + NADPH. In terms of biological role, plays a role in intermediary metabolism and energy production. It may tightly associate or interact with the pyruvate dehydrogenase complex. The chain is Isocitrate dehydrogenase [NADP], mitochondrial (IDH2) from Homo sapiens (Human).